Reading from the N-terminus, the 712-residue chain is Glycine--tRNA ligase beta subunit (712 aa).

It belongs to the class-II aminoacyl-tRNA synthetase family. As to quaternary structure, tetramer of two alpha and two beta subunits.

The protein localises to the cytoplasm. It catalyses the reaction tRNA(Gly) + glycine + ATP = glycyl-tRNA(Gly) + AMP + diphosphate. The protein is Glycine--tRNA ligase beta subunit of Acaryochloris marina (strain MBIC 11017).